We begin with the raw amino-acid sequence, 261 residues long: UPF0328 protein ECU02_0020/ECU04_1700 (261 aa).

Positions 1-20 are disordered; the sequence is MSITSIPQPHETNEQHHTEI. Residues 11–20 show a composition bias toward basic and acidic residues; the sequence is ETNEQHHTEI.

It belongs to the UPF0328 family.

This chain is UPF0328 protein ECU02_0020/ECU04_1700, found in Encephalitozoon cuniculi (strain GB-M1) (Microsporidian parasite).